A 663-amino-acid chain; its full sequence is Bifunctional polymyxin resistance protein ArnA (663 aa).

A formyltransferase ArnAFT region spans residues 1-307 (MSSKAVVFAY…ELGLVDGSVL (307 aa)). The active-site Proton donor; for formyltransferase activity is histidine 106. (6R)-10-formyltetrahydrofolate is bound by residues arginine 116 and 138–142 (VKRAD). Residues 317–663 (RRTRVLILGV…EAMLEIADKK (347 aa)) are dehydrogenase ArnADH. Residues aspartate 350 and 371 to 372 (DI) each bind NAD(+). UDP-alpha-D-glucuronate-binding positions include alanine 396, tyrosine 401, and 435-436 (TS). The active-site Proton acceptor; for decarboxylase activity is the glutamate 437. UDP-alpha-D-glucuronate is bound by residues arginine 463, asparagine 494, 528–537 (RLFDGGEQKR), and tyrosine 615. The active-site Proton donor; for decarboxylase activity is the arginine 621.

The protein in the N-terminal section; belongs to the Fmt family. UDP-L-Ara4N formyltransferase subfamily. This sequence in the C-terminal section; belongs to the NAD(P)-dependent epimerase/dehydratase family. UDP-glucuronic acid decarboxylase subfamily. Homohexamer, formed by a dimer of trimers.

It carries out the reaction UDP-alpha-D-glucuronate + NAD(+) = UDP-beta-L-threo-pentopyranos-4-ulose + CO2 + NADH. It catalyses the reaction UDP-4-amino-4-deoxy-beta-L-arabinose + (6R)-10-formyltetrahydrofolate = UDP-4-deoxy-4-formamido-beta-L-arabinose + (6S)-5,6,7,8-tetrahydrofolate + H(+). It functions in the pathway nucleotide-sugar biosynthesis; UDP-4-deoxy-4-formamido-beta-L-arabinose biosynthesis; UDP-4-deoxy-4-formamido-beta-L-arabinose from UDP-alpha-D-glucuronate: step 1/3. Its pathway is nucleotide-sugar biosynthesis; UDP-4-deoxy-4-formamido-beta-L-arabinose biosynthesis; UDP-4-deoxy-4-formamido-beta-L-arabinose from UDP-alpha-D-glucuronate: step 3/3. The protein operates within bacterial outer membrane biogenesis; lipopolysaccharide biosynthesis. Functionally, bifunctional enzyme that catalyzes the oxidative decarboxylation of UDP-glucuronic acid (UDP-GlcUA) to UDP-4-keto-arabinose (UDP-Ara4O) and the addition of a formyl group to UDP-4-amino-4-deoxy-L-arabinose (UDP-L-Ara4N) to form UDP-L-4-formamido-arabinose (UDP-L-Ara4FN). The modified arabinose is attached to lipid A and is required for resistance to polymyxin and cationic antimicrobial peptides. The chain is Bifunctional polymyxin resistance protein ArnA from Pseudomonas fluorescens (strain SBW25).